A 226-amino-acid polypeptide reads, in one-letter code: Adenylate kinase (226 aa).

An ATP-binding site is contributed by 11–16 (GSGKGT). Positions 31–64 (SAGEILKHALSVTKFHFNFNTDNMLNQINSGNLV) are NMP. AMP is bound by residues 62-64 (NLV), 90-93 (GFPR), and glutamine 97. The tract at residues 127 to 164 (GRQVHIKSGRTYHIKFNPPKLDGIDDITGEKLVIRADD) is LID. Residues arginine 128 and 137 to 138 (TY) each bind ATP. Residues arginine 161 and arginine 172 each coordinate AMP. Glutamine 205 is an ATP binding site.

It belongs to the adenylate kinase family. In terms of assembly, monomer.

The protein localises to the cytoplasm. It catalyses the reaction AMP + ATP = 2 ADP. It functions in the pathway purine metabolism; AMP biosynthesis via salvage pathway; AMP from ADP: step 1/1. Its function is as follows. Catalyzes the reversible transfer of the terminal phosphate group between ATP and AMP. Plays an important role in cellular energy homeostasis and in adenine nucleotide metabolism. This chain is Adenylate kinase, found in Blochmanniella floridana.